Reading from the N-terminus, the 448-residue chain is MPRCPAGAMDEGPVDLRTRPKGTPGAALPLRKRPLRPASPEPATTRSPAGPLDALRSGCDVPVVPGPPHCVARPEALYYQGPLMPIYSTPTMAPHFPLLNLPTHPYSMICPMEHPLSADIAMATRVDEDGDTPLHIAVVQNNIAAVYRILSLFKLGSREVDVHNNLRQTPLHLAVITTLPDMVRLLVTAGASPMALDRHGQTAIHLACEHRSPSCLQALLDSATSGSVDLEVRNYEGLTALHVAVNTGCQEAVLLLLERGADIDAVDIKSGRSPLIHAVENNSLNMVQLLLLHGANVNAQMYSGSSALHSASGRGLLPLVRTLVRSGADSGLKNCHNDTPLMVARSRRVIDILRGKASRAASGSQPEPSPDQSATNSPESSSRLSSNGLQSSPSSSPSLSPPKDAPGFPATPQNFFLPTTSTPAFLPFPGVLRGPGRPVPPSPAPGSS.

The tract at residues 1 to 54 is disordered; it reads MPRCPAGAMDEGPVDLRTRPKGTPGAALPLRKRPLRPASPEPATTRSPAGPLDA. The residue at position 39 (S39) is a Phosphoserine. 7 ANK repeats span residues 129–161, 166–195, 199–228, 236–265, 270–299, 303–332, and 333–362; these read DGDT…REVD, LRQT…SPMA, HGQT…SGSV, EGLT…DIDA, SGRS…NVNA, SGSS…DSGL, and KNCH…RAAS. Residues 356–448 form a disordered region; it reads KASRAASGSQ…VPPSPAPGSS (93 aa). The segment covering 361–376 has biased composition (polar residues); sequence ASGSQPEPSPDQSATN. At S369 the chain carries Phosphoserine. Over residues 377–398 the composition is skewed to low complexity; that stretch reads SPESSSRLSSNGLQSSPSSSPS. 2 positions are modified to phosphoserine; by GSK3: S396 and S400. Residues 411 to 423 show a composition bias toward polar residues; the sequence is TPQNFFLPTTSTP. The span at 425–436 shows a compositional bias: low complexity; the sequence is FLPFPGVLRGPG. Positions 437-448 are enriched in pro residues; that stretch reads RPVPPSPAPGSS.

In terms of assembly, component of a complex consisting of the NF-kappa-B p52-p52 homodimer and BCL3. Component of a complex consisting of the NF-kappa-B p50-p50 homodimer and BCL3. Interacts with N4BP2, COPS5 and PIR. Interacts with CYLD. Polyubiquitinated. Ubiquitination via 'Lys-63'-linked ubiquitin chains is required for nuclear accumulation. Deubiquitinated by CYLD, which acts on 'Lys-63'-linked ubiquitin chains. Deubiquitination by CYLD prevents nuclear accumulation. Post-translationally, activated by phosphorylation.

The protein resides in the nucleus. It localises to the cytoplasm. It is found in the perinuclear region. In terms of biological role, contributes to the regulation of transcriptional activation of NF-kappa-B target genes. In the cytoplasm, inhibits the nuclear translocation of the NF-kappa-B p50 subunit. In the nucleus, acts as a transcriptional activator that promotes transcription of NF-kappa-B target genes. Contributes to the regulation of cell proliferation. The polypeptide is B-cell lymphoma 3 protein homolog (Bcl3) (Mus musculus (Mouse)).